Here is a 500-residue protein sequence, read N- to C-terminus: Raftlin-2 (500 aa).

Gly2 is lipidated: N-myristoyl glycine. A lipid anchor (S-palmitoyl cysteine) is attached at Cys3. Positions 203-236 (GHLSESGVEEEPQHESGQHQTERNSSPSYANPKR) are disordered. Basic and acidic residues predominate over residues 213 to 224 (EPQHESGQHQTE). Ser404 carries the phosphoserine modification. The tract at residues 406–500 (AQTPERKGSR…EEGVTQVTCM (95 aa)) is disordered. The residue at position 408 (Thr408) is a Phosphothreonine. Positions 409-424 (PERKGSRLLKGEDRNK) are enriched in basic and acidic residues. Polar residues predominate over residues 426-438 (SSRSLGLDTNASQ). Residue Ser429 is modified to Phosphoserine. A compositionally biased stretch (low complexity) spans 467–478 (SDSFSGFSSSDS).

Belongs to the raftlin family. Expressed in B-cells, heart, brain, spleen, large intestine and lung. Expressed in dendritic cells and macrophages.

Its subcellular location is the cell membrane. Functionally, upon bacterial lipopolysaccharide stimulation, mediates clathrin-dependent internalization of TLR4 in dendritic cells, resulting in activation of TICAM1-mediated signaling and subsequent IFNB1 production. May regulate B-cell antigen receptor-mediated signaling. The polypeptide is Raftlin-2 (Rftn2) (Mus musculus (Mouse)).